Consider the following 219-residue polypeptide: ATP-dependent Clp protease proteolytic subunit (219 aa).

Ser101 functions as the Nucleophile in the catalytic mechanism. The active site involves His126.

This sequence belongs to the peptidase S14 family. As to quaternary structure, component of the chloroplastic Clp protease core complex.

The protein resides in the plastid. The protein localises to the chloroplast stroma. The enzyme catalyses Hydrolysis of proteins to small peptides in the presence of ATP and magnesium. alpha-casein is the usual test substrate. In the absence of ATP, only oligopeptides shorter than five residues are hydrolyzed (such as succinyl-Leu-Tyr-|-NHMec, and Leu-Tyr-Leu-|-Tyr-Trp, in which cleavage of the -Tyr-|-Leu- and -Tyr-|-Trp bonds also occurs).. Cleaves peptides in various proteins in a process that requires ATP hydrolysis. Has a chymotrypsin-like activity. Plays a major role in the degradation of misfolded proteins. This Chara vulgaris (Common stonewort) protein is ATP-dependent Clp protease proteolytic subunit.